A 132-amino-acid chain; its full sequence is Fluoride-specific ion channel FluC 2 (132 aa).

The next 4 membrane-spanning stretches (helical) occupy residues 12 to 32, 41 to 61, 65 to 85, and 96 to 116; these read LTEL…RWQL, LLVN…PVAP, LLVG…MLAA, and AALG…ALGF. Na(+) is bound by residues Gly-73 and Thr-76.

This sequence belongs to the fluoride channel Fluc/FEX (TC 1.A.43) family.

The protein localises to the cell inner membrane. It catalyses the reaction fluoride(in) = fluoride(out). Na(+) is not transported, but it plays an essential structural role and its presence is essential for fluoride channel function. Its function is as follows. Fluoride-specific ion channel. Important for reducing fluoride concentration in the cell, thus reducing its toxicity. The protein is Fluoride-specific ion channel FluC 2 of Parasynechococcus marenigrum (strain WH8102).